A 137-amino-acid polypeptide reads, in one-letter code: Phosphoribosyl-AMP cyclohydrolase (137 aa).

Aspartate 84 serves as a coordination point for Mg(2+). Cysteine 85 lines the Zn(2+) pocket. Mg(2+)-binding residues include aspartate 86 and aspartate 88. Positions 101 and 108 each coordinate Zn(2+).

This sequence belongs to the PRA-CH family. In terms of assembly, homodimer. Requires Mg(2+) as cofactor. Zn(2+) serves as cofactor.

Its subcellular location is the cytoplasm. It catalyses the reaction 1-(5-phospho-beta-D-ribosyl)-5'-AMP + H2O = 1-(5-phospho-beta-D-ribosyl)-5-[(5-phospho-beta-D-ribosylamino)methylideneamino]imidazole-4-carboxamide. The protein operates within amino-acid biosynthesis; L-histidine biosynthesis; L-histidine from 5-phospho-alpha-D-ribose 1-diphosphate: step 3/9. Functionally, catalyzes the hydrolysis of the adenine ring of phosphoribosyl-AMP. In Chlorobium chlorochromatii (strain CaD3), this protein is Phosphoribosyl-AMP cyclohydrolase.